The primary structure comprises 308 residues: Dihydroorotate dehydrogenase A (fumarate) (308 aa).

Residues serine 24 and 48-49 (KS) contribute to the FMN site. Substrate is bound by residues lysine 48, 72 to 76 (NANGL), and asparagine 132. FMN is bound at residue asparagine 132. Cysteine 135 serves as the catalytic Nucleophile. 2 residues coordinate FMN: lysine 171 and isoleucine 197. Residue 198–199 (NT) coordinates substrate. FMN is bound by residues glycine 223 and 249–250 (GG).

Belongs to the dihydroorotate dehydrogenase family. Type 1 subfamily. Homodimer. It depends on FMN as a cofactor.

It localises to the cytoplasm. The catalysed reaction is (S)-dihydroorotate + fumarate = orotate + succinate. The protein operates within pyrimidine metabolism; UMP biosynthesis via de novo pathway. Functionally, catalyzes the conversion of dihydroorotate to orotate with fumarate as the electron acceptor. This Limosilactobacillus reuteri (strain DSM 20016) (Lactobacillus reuteri) protein is Dihydroorotate dehydrogenase A (fumarate) (pyrD).